The primary structure comprises 269 residues: Interleukin-1 beta (269 aa).

Residues 1-117 (MATVPELNCE…DDDDNLLVCD (117 aa)) constitute a propeptide that is removed on maturation.

This sequence belongs to the IL-1 family. In terms of assembly, monomer. Interacts with MEFV. Interacts with integrins ITGAV:ITGBV and ITGA5:ITGB1; integrin-binding is required for IL1B signaling. Interacts with cargo receptor TMED10; the interaction is direct and is required for the secretion of IL1B mature form. Interacts with HSP90AB1; the interaction facilitates cargo translocation into the ERGIC. Interacts with HSP90B1; the interaction facilitates cargo translocation into the ERGIC. As to expression, expressed in activated macrophages (at protein level).

Its subcellular location is the cytoplasm. It is found in the cytosol. The protein resides in the secreted. The protein localises to the lysosome. It localises to the extracellular exosome. Its function is as follows. Potent pro-inflammatory cytokine. Initially discovered as the major endogenous pyrogen, induces prostaglandin synthesis, neutrophil influx and activation, T-cell activation and cytokine production, B-cell activation and antibody production, and fibroblast proliferation and collagen production. Promotes Th17 differentiation of T-cells. Synergizes with IL12/interleukin-12 to induce IFNG synthesis from T-helper 1 (Th1) cells. Plays a role in angiogenesis by inducing VEGF production synergistically with TNF and IL6. Involved in transduction of inflammation downstream of pyroptosis: its mature form is specifically released in the extracellular milieu by passing through the gasdermin-D (GSDMD) pore. The polypeptide is Interleukin-1 beta (Il1b) (Mus musculus (Mouse)).